A 250-amino-acid polypeptide reads, in one-letter code: 3-deoxy-manno-octulosonate cytidylyltransferase (250 aa).

This sequence belongs to the KdsB family.

The protein localises to the cytoplasm. It catalyses the reaction 3-deoxy-alpha-D-manno-oct-2-ulosonate + CTP = CMP-3-deoxy-beta-D-manno-octulosonate + diphosphate. It participates in nucleotide-sugar biosynthesis; CMP-3-deoxy-D-manno-octulosonate biosynthesis; CMP-3-deoxy-D-manno-octulosonate from 3-deoxy-D-manno-octulosonate and CTP: step 1/1. It functions in the pathway bacterial outer membrane biogenesis; lipopolysaccharide biosynthesis. Its function is as follows. Activates KDO (a required 8-carbon sugar) for incorporation into bacterial lipopolysaccharide in Gram-negative bacteria. This is 3-deoxy-manno-octulosonate cytidylyltransferase from Azorhizobium caulinodans (strain ATCC 43989 / DSM 5975 / JCM 20966 / LMG 6465 / NBRC 14845 / NCIMB 13405 / ORS 571).